The sequence spans 567 residues: Proline--tRNA ligase (567 aa).

The protein belongs to the class-II aminoacyl-tRNA synthetase family. ProS type 1 subfamily. As to quaternary structure, homodimer.

Its subcellular location is the cytoplasm. The catalysed reaction is tRNA(Pro) + L-proline + ATP = L-prolyl-tRNA(Pro) + AMP + diphosphate. Functionally, catalyzes the attachment of proline to tRNA(Pro) in a two-step reaction: proline is first activated by ATP to form Pro-AMP and then transferred to the acceptor end of tRNA(Pro). As ProRS can inadvertently accommodate and process non-cognate amino acids such as alanine and cysteine, to avoid such errors it has two additional distinct editing activities against alanine. One activity is designated as 'pretransfer' editing and involves the tRNA(Pro)-independent hydrolysis of activated Ala-AMP. The other activity is designated 'posttransfer' editing and involves deacylation of mischarged Ala-tRNA(Pro). The misacylated Cys-tRNA(Pro) is not edited by ProRS. This Streptomyces coelicolor (strain ATCC BAA-471 / A3(2) / M145) protein is Proline--tRNA ligase.